Here is a 65-residue protein sequence, read N- to C-terminus: Small ribosomal subunit protein bS21B (65 aa).

Belongs to the bacterial ribosomal protein bS21 family.

The polypeptide is Small ribosomal subunit protein bS21B (Francisella tularensis subsp. holarctica (strain LVS)).